The chain runs to 320 residues: HPr kinase/phosphorylase (320 aa).

Catalysis depends on residues His141 and Lys162. ATP is bound at residue 156 to 163 (GHSGLGKS). Ser163 is a Mg(2+) binding site. The active-site Proton acceptor; for phosphorylation activity. Proton donor; for dephosphorylation activity is the Asp180. The interval 204 to 213 (LEVRGLGILN) is important for the catalytic mechanism of both phosphorylation and dephosphorylation. Glu205 contacts Mg(2+). Arg248 is an active-site residue. The important for the catalytic mechanism of dephosphorylation stretch occupies residues 269-274 (PVAVGR).

The protein belongs to the HPrK/P family. In terms of assembly, homohexamer. Mg(2+) serves as cofactor.

The enzyme catalyses [HPr protein]-L-serine + ATP = [HPr protein]-O-phospho-L-serine + ADP + H(+). The catalysed reaction is [HPr protein]-O-phospho-L-serine + phosphate + H(+) = [HPr protein]-L-serine + diphosphate. Catalyzes the ATP- as well as the pyrophosphate-dependent phosphorylation of a specific serine residue in HPr, a phosphocarrier protein of the phosphoenolpyruvate-dependent sugar phosphotransferase system (PTS). HprK/P also catalyzes the pyrophosphate-producing, inorganic phosphate-dependent dephosphorylation (phosphorolysis) of seryl-phosphorylated HPr (P-Ser-HPr). This chain is HPr kinase/phosphorylase, found in Neisseria meningitidis serogroup A / serotype 4A (strain DSM 15465 / Z2491).